We begin with the raw amino-acid sequence, 352 residues long: Photosystem II D2 protein (352 aa).

T2 bears the N-acetylthreonine mark. Position 2 is a phosphothreonine (T2). Residues 40-60 (TAYLALGGWFTGTTFVTSWYT) traverse the membrane as a helical segment. H117 contributes to the chlorophyll a binding site. The helical transmembrane segment at 124 to 140 (GFMLRQFEIARSVKIRP) threads the bilayer. The pheophytin a site is built by Q129 and N142. A helical membrane pass occupies residues 152–165 (VFVSVFLIYPLGQS). Residue H197 coordinates chlorophyll a. The helical transmembrane segment at 207–227 (AALLCAIHGATVENTLFEDGD) threads the bilayer. Residues H214 and F261 each contribute to the a plastoquinone site. H214 contacts Fe cation. H268 contributes to the Fe cation binding site. Residues 278 to 294 (GLWMSAIGVVGLALNLR) traverse the membrane as a helical segment.

This sequence belongs to the reaction center PufL/M/PsbA/D family. PSII is composed of 1 copy each of membrane proteins PsbA, PsbB, PsbC, PsbD, PsbE, PsbF, PsbH, PsbI, PsbJ, PsbK, PsbL, PsbM, PsbT, PsbX, PsbY, PsbZ, Psb30/Ycf12, at least 3 peripheral proteins of the oxygen-evolving complex and a large number of cofactors. It forms dimeric complexes. The D1/D2 heterodimer binds P680, chlorophylls that are the primary electron donor of PSII, and subsequent electron acceptors. It shares a non-heme iron and each subunit binds pheophytin, quinone, additional chlorophylls, carotenoids and lipids. There is also a Cl(-1) ion associated with D1 and D2, which is required for oxygen evolution. The PSII complex binds additional chlorophylls, carotenoids and specific lipids. serves as cofactor.

Its subcellular location is the plastid. The protein localises to the chloroplast thylakoid membrane. The catalysed reaction is 2 a plastoquinone + 4 hnu + 2 H2O = 2 a plastoquinol + O2. In terms of biological role, photosystem II (PSII) is a light-driven water:plastoquinone oxidoreductase that uses light energy to abstract electrons from H(2)O, generating O(2) and a proton gradient subsequently used for ATP formation. It consists of a core antenna complex that captures photons, and an electron transfer chain that converts photonic excitation into a charge separation. The D1/D2 (PsbA/PsbD) reaction center heterodimer binds P680, the primary electron donor of PSII as well as several subsequent electron acceptors. D2 is needed for assembly of a stable PSII complex. This is Photosystem II D2 protein from Chlorella vulgaris (Green alga).